Reading from the N-terminus, the 298-residue chain is Ribosomal protein L11 methyltransferase (298 aa).

S-adenosyl-L-methionine is bound by residues Thr-139, Gly-163, Asp-185, and Asn-232.

Belongs to the methyltransferase superfamily. PrmA family.

It is found in the cytoplasm. It carries out the reaction L-lysyl-[protein] + 3 S-adenosyl-L-methionine = N(6),N(6),N(6)-trimethyl-L-lysyl-[protein] + 3 S-adenosyl-L-homocysteine + 3 H(+). Functionally, methylates ribosomal protein L11. This Microcystis aeruginosa (strain NIES-843 / IAM M-2473) protein is Ribosomal protein L11 methyltransferase.